Consider the following 1070-residue polypeptide: Ubiquitin-protein ligase E3B (1070 aa).

Met1 is modified (N-acetylmethionine). The region spanning 29–58 is the IQ domain; that stretch reads RERSAVTIQALVRSFLCRRRLHRDIRKEID. Ser421 is modified (phosphoserine). One can recognise an HECT domain in the interval 704 to 1070; the sequence is SQHAMKGVIR…ISMNTGFELS (367 aa). Catalysis depends on Cys1038, which acts as the Glycyl thioester intermediate.

In terms of tissue distribution, widely expressed. High expression is observed in developing central nervous system.

The protein localises to the postsynaptic density. It catalyses the reaction S-ubiquitinyl-[E2 ubiquitin-conjugating enzyme]-L-cysteine + [acceptor protein]-L-lysine = [E2 ubiquitin-conjugating enzyme]-L-cysteine + N(6)-ubiquitinyl-[acceptor protein]-L-lysine.. Its pathway is protein modification; protein ubiquitination. In terms of biological role, E3 ubiquitin-protein ligase which accepts ubiquitin from an E2 ubiquitin-conjugating enzyme in the form of a thioester and then directly transfers the ubiquitin to targeted substrates. Ubiquitinates BCKDK and targets it for degradation, thereby regulating various metabolic processes. Involved in the positive regulation of neurite branching in hippocampal neurons and the control of neuronal spine number and morphology, through the ubiquitination of PPP3CC. The chain is Ubiquitin-protein ligase E3B (Ube3b) from Mus musculus (Mouse).